A 268-amino-acid chain; its full sequence is MEFAHLTVLSLFCLAFVGITATSSGEDYWQSIWPNTPLPKTFSDLLIPSGKTNSLPIKSEELKQYSTLFFEHDLHPGKNFILGNTNSVGSIIRPFTKSRQGVTDSIWLANKEKQSLEDFCYSPTAIAEHKHCVSSLKSMIDQVISHFGSTKIKAISSNFAPYQDQYVVEDVKKVGDNAVMCHRLNFEKVVFNCHQVRDTTAYVVSLVASDGTKTKALTVCHHDTRGMNPELLYEALEVTPGTVPVCHFIGNKAAAWVPNHTADNLCVM.

An N-terminal signal peptide occupies residues 1-25 (MEFAHLTVLSLFCLAFVGITATSSG). A BURP domain is found at 68–259 (LFFEHDLHPG…GNKAAAWVPN (192 aa)). N-linked (GlcNAc...) asparagine glycosylation occurs at Asn259.

In terms of tissue distribution, seed.

It localises to the secreted. This is Embryonic abundant protein VF30.1 from Vicia faba (Broad bean).